Here is a 521-residue protein sequence, read N- to C-terminus: GMP synthase [glutamine-hydrolyzing] (521 aa).

The region spanning 8-203 is the Glutamine amidotransferase type-1 domain; sequence KILILDFGAQ…VVDVCGCQTL (196 aa). The active-site Nucleophile is cysteine 85. Residues histidine 177 and glutamate 179 contribute to the active site. The 193-residue stretch at 204-396 folds into the GMPS ATP-PPase domain; that stretch reads WTAANIIDDQ…LGLPRTMVYR (193 aa). 231–237 serves as a coordination point for ATP; sequence SGGVDSS.

As to quaternary structure, homodimer.

The catalysed reaction is XMP + L-glutamine + ATP + H2O = GMP + L-glutamate + AMP + diphosphate + 2 H(+). The protein operates within purine metabolism; GMP biosynthesis; GMP from XMP (L-Gln route): step 1/1. Its function is as follows. Catalyzes the synthesis of GMP from XMP. The chain is GMP synthase [glutamine-hydrolyzing] from Stenotrophomonas maltophilia (strain K279a).